Reading from the N-terminus, the 272-residue chain is Tropinone reductase-like 1 (272 aa).

Position 17-41 (17-41 (IITGGASGIGACTAELFHENGAKVV)) interacts with NAD(+). Position 150 (Ser-150) interacts with substrate. Residue Tyr-163 is the Proton acceptor of the active site.

It belongs to the short-chain dehydrogenases/reductases (SDR) family.

Has no tropinone reductase activity. The chain is Tropinone reductase-like 1 from Erythroxylum coca (Coca plant).